We begin with the raw amino-acid sequence, 949 residues long: Lon protease homolog, mitochondrial (949 aa).

The N-terminal 65 residues, 1–65, are a transit peptide targeting the mitochondrion; that stretch reads MAASTGYVRL…VLPGGVQWRG (65 aa). 2 disordered regions span residues 68 to 94 and 213 to 240; these read DSGN…TGEG and EGLE…DELG. A Lon N-terminal domain is found at 112–359; that stretch reads LPLIAITRNP…KALSLLKKEF (248 aa). A compositionally biased stretch (basic residues) spans 223–232; sequence KSRRKLKRGK. 512–519 contacts ATP; the sequence is GPPGVGKT. The 191-residue stretch at 748 to 938 folds into the Lon proteolytic domain; the sequence is VTPPGVVMGL…RDIFPIAFPR (191 aa). Active-site residues include S844 and K887.

This sequence belongs to the peptidase S16 family. In terms of assembly, homohexamer. Organized in a ring with a central cavity. The ATP-binding and proteolytic domains (AP-domain) form a hexameric chamber, while the N-terminal domain is arranged as a trimer of dimers. DNA and RNA binding is stimulated by substrate and inhibited by ATP binding. Interacts with TWNK and mitochondrial DNA polymerase subunit POLG. As to expression, detected in liver &gt; heart &gt; kidney &gt; testis.

Its subcellular location is the mitochondrion matrix. The enzyme catalyses Hydrolysis of proteins in presence of ATP.. In terms of biological role, ATP-dependent serine protease that mediates the selective degradation of misfolded, unassembled or oxidatively damaged polypeptides as well as certain short-lived regulatory proteins in the mitochondrial matrix. Endogenous substrates include mitochondrial steroidogenic acute regulatory (StAR) protein, DELE1, helicase Twinkle (TWNK) and the large ribosomal subunit protein MRPL32/bL32m. MRPL32/bL32m is protected from degradation by LONP1 when it is bound to a nucleic acid (RNA), but TWNK is not. May also have a chaperone function in the assembly of inner membrane protein complexes. Participates in the regulation of mitochondrial gene expression and in the maintenance of the integrity of the mitochondrial genome. Binds to mitochondrial promoters and RNA in a single-stranded, site-specific, and strand-specific manner. May regulate mitochondrial DNA replication and/or gene expression using site-specific, single-stranded DNA binding to target the degradation of regulatory proteins binding to adjacent sites in mitochondrial promoters. This is Lon protease homolog, mitochondrial (Lonp1) from Mus musculus (Mouse).